The following is a 224-amino-acid chain: Large ribosomal subunit protein uL4 (224 aa).

A disordered region spans residues 54-73 (NRSEVSHSTKKPFRQKGTGN).

The protein belongs to the universal ribosomal protein uL4 family. In terms of assembly, part of the 50S ribosomal subunit.

Its function is as follows. One of the primary rRNA binding proteins, this protein initially binds near the 5'-end of the 23S rRNA. It is important during the early stages of 50S assembly. It makes multiple contacts with different domains of the 23S rRNA in the assembled 50S subunit and ribosome. Functionally, forms part of the polypeptide exit tunnel. The protein is Large ribosomal subunit protein uL4 of Chlamydia felis (strain Fe/C-56) (Chlamydophila felis).